We begin with the raw amino-acid sequence, 282 residues long: 2-dehydro-3-deoxyphosphooctonate aldolase (282 aa).

It belongs to the KdsA family.

The protein localises to the cytoplasm. The enzyme catalyses D-arabinose 5-phosphate + phosphoenolpyruvate + H2O = 3-deoxy-alpha-D-manno-2-octulosonate-8-phosphate + phosphate. It participates in carbohydrate biosynthesis; 3-deoxy-D-manno-octulosonate biosynthesis; 3-deoxy-D-manno-octulosonate from D-ribulose 5-phosphate: step 2/3. The protein operates within bacterial outer membrane biogenesis; lipopolysaccharide biosynthesis. The polypeptide is 2-dehydro-3-deoxyphosphooctonate aldolase (Shewanella piezotolerans (strain WP3 / JCM 13877)).